The primary structure comprises 727 residues: Protein EXECUTER 1, chloroplastic (727 aa).

Disordered regions lie at residues 1–51 (MAAA…SRLF), 65–102 (LAGAAPAPAPRRRVSSVVRCGGGGGGVRSPDDADAGSG), 340–381 (ISSS…LPSD), and 413–455 (DEDD…SGDE). A chloroplast-targeting transit peptide spans 1 to 83 (MAAAVSTAPR…PRRRVSSVVR (83 aa)). Composition is skewed to low complexity over residues 19–33 (SSSCCSSSSSSASMS) and 42–51 (PSSGSGSRLF). Residues 413–441 (DEDDENDNPEDEIESSEDIGDGDNVEEAE) show a composition bias toward acidic residues.

The protein resides in the plastid. The protein localises to the chloroplast. Together with EX2, enables higher plants to perceive singlet oxygen as a stress signal in plastid that activates a genetically determined nuclear stress response program which triggers a programmed cell death (PCD). This transfer of singlet oxygen-induced stress-related signals from the plastid to the nucleus that triggers genetically controlled PCD pathway is unique to photosynthetic eukaryotes and operates under mild stress conditions, impeding photosystem II (PSII) without causing photooxidative damage of the plant. The protein is Protein EXECUTER 1, chloroplastic of Oryza sativa subsp. japonica (Rice).